Here is a 660-residue protein sequence, read N- to C-terminus: Cysteine-rich receptor-like protein kinase 22 (660 aa).

The first 24 residues, 1–24, serve as a signal peptide directing secretion; the sequence is MKQRSFLSILCFILLAFGVASVSA. 2 consecutive Gnk2-homologous domains span residues 25-128 and 137-250; these read QTCI…NISF and IEPQ…LFTF. The Extracellular portion of the chain corresponds to 25 to 294; it reads QTCIENRKYF…DSRGVSAGIV (270 aa). Asn-37, Asn-53, Asn-105, Asn-125, Asn-191, Asn-230, and Asn-256 each carry an N-linked (GlcNAc...) asparagine glycan. The segment covering 264–273 has biased composition (pro residues); it reads KPPMNVPRPP. Positions 264–283 are disordered; that stretch reads KPPMNVPRPPSVGHGANTTD. Asn-280 and Asn-284 each carry an N-linked (GlcNAc...) asparagine glycan. A helical transmembrane segment spans residues 295–315; sequence VVITVPAVVIVLILVVLGFFI. Residues 316–660 are Cytoplasmic-facing; it reads CWRRKSLQRT…DPLSEGLESG (345 aa). The region spanning 353–632 is the Protein kinase domain; it reads FSKSNKLGEG…IVSMLTSNTI (280 aa). Residues 359 to 367 and Lys-381 each bind ATP; that span reads LGEGRFGEV. The residue at position 426 (Tyr-426) is a Phosphotyrosine. Asp-478 acts as the Proton acceptor in catalysis. Ser-482 carries the post-translational modification Phosphoserine. Thr-518 is modified (phosphothreonine). Tyr-526 carries the phosphotyrosine modification.

It belongs to the protein kinase superfamily. Ser/Thr protein kinase family. CRK subfamily.

The protein localises to the membrane. The catalysed reaction is L-seryl-[protein] + ATP = O-phospho-L-seryl-[protein] + ADP + H(+). The enzyme catalyses L-threonyl-[protein] + ATP = O-phospho-L-threonyl-[protein] + ADP + H(+). The sequence is that of Cysteine-rich receptor-like protein kinase 22 (CRK22) from Arabidopsis thaliana (Mouse-ear cress).